Reading from the N-terminus, the 341-residue chain is Trimethylamine N-oxide transport system ATP-binding protein TmoW (341 aa).

The region spanning 6–265 is the ABC transporter domain; sequence IKCESVYKIF…PATEYVRKFT (260 aa). Position 61–68 (61–68) interacts with ATP; sequence GLSGSGKS.

It belongs to the ABC transporter superfamily. In terms of assembly, the complex is probably composed of two ATP-binding proteins (TmoW), two transmembrane proteins (TmoV) and a solute-binding protein (TmoX).

The protein resides in the cell inner membrane. It carries out the reaction a quaternary ammonium(out) + ATP + H2O = a quaternary ammonium(in) + ADP + phosphate + H(+). Functionally, part of the ABC transporter complex TmoXWV involved in trimethylamine N-oxide (TMAO) import. Responsible for energy coupling to the transport system. This is Trimethylamine N-oxide transport system ATP-binding protein TmoW from Pelagibacter ubique (strain HTCC1062).